The chain runs to 392 residues: Chorismate synthase (392 aa).

NADP(+)-binding residues include Arg-40 and Arg-46. FMN-binding positions include 129–131 (RSS), 257–258 (QA), Gly-302, 317–321 (KPIAT), and Arg-343.

Belongs to the chorismate synthase family. In terms of assembly, homotetramer. FMNH2 is required as a cofactor.

It catalyses the reaction 5-O-(1-carboxyvinyl)-3-phosphoshikimate = chorismate + phosphate. It functions in the pathway metabolic intermediate biosynthesis; chorismate biosynthesis; chorismate from D-erythrose 4-phosphate and phosphoenolpyruvate: step 7/7. Catalyzes the anti-1,4-elimination of the C-3 phosphate and the C-6 proR hydrogen from 5-enolpyruvylshikimate-3-phosphate (EPSP) to yield chorismate, which is the branch point compound that serves as the starting substrate for the three terminal pathways of aromatic amino acid biosynthesis. This reaction introduces a second double bond into the aromatic ring system. The protein is Chorismate synthase of Chloroherpeton thalassium (strain ATCC 35110 / GB-78).